The chain runs to 126 residues: C-type natriuretic peptide (126 aa).

Positions 1–23 (MHLSQLLACALLLSLLSLRPSEA) are cleaved as a signal peptide. Residues 20–71 (PSEAKPGAPPKVPRTPPGEEVAEPQAAGGGQKKGDKTPGGGGANLKDDRSRL) form a disordered region. Positions 24 to 73 (KPGAPPKVPRTPPGEEVAEPQAAGGGQKKGDKTPGGGGANLKDDRSRLLR) are excised as a propeptide. The span at 26 to 35 (GAPPKVPRTP) shows a compositional bias: pro residues. The segment covering 46–62 (AGGGQKKGDKTPGGGGA) has biased composition (gly residues). An intrachain disulfide couples cysteine 110 to cysteine 126.

It belongs to the natriuretic peptide family. In terms of processing, degraded by IDE (in vitro).

It is found in the secreted. Functionally, hormone which plays a role in endochondral ossification through regulation of cartilaginous growth plate chondrocytes proliferation and differentiation. May also be vasoactive and natriuretic. Acts by specifically binding and stimulating NPR2 to produce cGMP. Binds the clearance receptor NPR3. The polypeptide is C-type natriuretic peptide (NPPC) (Ovis aries (Sheep)).